The sequence spans 456 residues: UDP-N-acetylmuramate--L-alanine ligase (456 aa).

An ATP-binding site is contributed by 114-120 (GTHGKTT).

The protein belongs to the MurCDEF family.

Its subcellular location is the cytoplasm. It catalyses the reaction UDP-N-acetyl-alpha-D-muramate + L-alanine + ATP = UDP-N-acetyl-alpha-D-muramoyl-L-alanine + ADP + phosphate + H(+). It functions in the pathway cell wall biogenesis; peptidoglycan biosynthesis. Functionally, cell wall formation. This chain is UDP-N-acetylmuramate--L-alanine ligase, found in Porphyromonas gingivalis (strain ATCC 33277 / DSM 20709 / CIP 103683 / JCM 12257 / NCTC 11834 / 2561).